We begin with the raw amino-acid sequence, 133 residues long: Protein msa (133 aa).

4 helical membrane-spanning segments follow: residues 3–23 (YLILSLVANLLVFGVLSAIGL), 27–47 (ILAAMMMILVIPITISGILFF), 55–75 (YIFFNILFIDFYYYIYNVHLM), and 103–123 (FGFDEILFFTLYLLLILIILY).

Its subcellular location is the cell membrane. Functionally, accessory element involved in the expression of sarA and several virulence factors. Modulates SarA production and/or function in a strain-dependent manner. Affects the transcription of the accessory gene regulator (agr) and genes encoding virulence factors including alpha toxin (hla) and protein A (spa). The protein is Protein msa (msa) of Staphylococcus aureus (strain bovine RF122 / ET3-1).